Reading from the N-terminus, the 63-residue chain is Cytochrome c oxidase subunit 5C-1 (63 aa).

Residues 15–34 (SEVKELIIGSVLGLAAGGLW) traverse the membrane as a helical segment.

Belongs to the cytochrome c oxidase subunit 5C family.

It is found in the mitochondrion inner membrane. This protein is one of the nuclear-coded polypeptide chains of cytochrome c oxidase, the terminal oxidase in mitochondrial electron transport. This chain is Cytochrome c oxidase subunit 5C-1 (COX5C1), found in Helianthus annuus (Common sunflower).